The chain runs to 218 residues: Small ribosomal subunit protein uS3c (218 aa).

One can recognise a KH type-2 domain in the interval 43–118 (IKNYVQKNMK…KLNISITRIE (76 aa)).

It belongs to the universal ribosomal protein uS3 family. As to quaternary structure, part of the 30S ribosomal subunit.

It localises to the plastid. The protein resides in the chloroplast. The sequence is that of Small ribosomal subunit protein uS3c (rps3) from Populus alba (White poplar).